The chain runs to 871 residues: Probable inorganic carbon transporter subunit DabA (871 aa).

Positions 396, 398, 577, and 592 each coordinate Zn(2+).

This sequence belongs to the inorganic carbon transporter (TC 9.A.2) DabA family. In terms of assembly, forms a complex with DabB. Zn(2+) is required as a cofactor.

It is found in the cell membrane. Functionally, part of an energy-coupled inorganic carbon pump. This chain is Probable inorganic carbon transporter subunit DabA, found in Bacillus subtilis (strain 168).